A 447-amino-acid polypeptide reads, in one-letter code: Probable glycine dehydrogenase (decarboxylating) subunit 1 (447 aa).

This sequence belongs to the GcvP family. N-terminal subunit subfamily. The glycine cleavage system is composed of four proteins: P, T, L and H. In this organism, the P 'protein' is a heterodimer of two subunits.

It catalyses the reaction N(6)-[(R)-lipoyl]-L-lysyl-[glycine-cleavage complex H protein] + glycine + H(+) = N(6)-[(R)-S(8)-aminomethyldihydrolipoyl]-L-lysyl-[glycine-cleavage complex H protein] + CO2. In terms of biological role, the glycine cleavage system catalyzes the degradation of glycine. The P protein binds the alpha-amino group of glycine through its pyridoxal phosphate cofactor; CO(2) is released and the remaining methylamine moiety is then transferred to the lipoamide cofactor of the H protein. The chain is Probable glycine dehydrogenase (decarboxylating) subunit 1 from Bacillus thuringiensis subsp. konkukian (strain 97-27).